The following is an 856-amino-acid chain: Structure-specific endonuclease subunit SLX4 (856 aa).

Residues 1–19 (MDNAAIASQSNTPPSNGRS) show a composition bias toward polar residues. Disordered regions lie at residues 1-24 (MDNAAIASQSNTPPSNGRSSARFV), 38-65 (VIEPSSPFSPPSPSTLLTSLSKSPSHKI), 88-121 (VDSPKRQDKSITGSKAKPASTMRHGQRTASHKMA), 139-202 (KTRK…DNEL), 296-326 (GIQTPTESRPATNDSQSISSKQQRVKVKKPQ), 362-392 (KKMGVTKRTSGTERANAARGKSDTLKNGNGP), 621-640 (SKSSKLEPKPNQRNHKSQGD), 668-689 (RLAKTSVKSQEPKSFSLSNEGP), and 715-742 (DSVGEALPLSPSHSSNGNGTLHHPQDCD). The span at 51–60 (STLLTSLSKS) shows a compositional bias: low complexity. A compositionally biased stretch (basic residues) spans 139–152 (KTRKKKAATAKRTR). Over residues 296-309 (GIQTPTESRPATND) the composition is skewed to polar residues. Residues 673-686 (SVKSQEPKSFSLSN) are compositionally biased toward polar residues.

It belongs to the SLX4 family. Forms a heterodimer with SLX1. Post-translationally, phosphorylated in response to DNA damage.

The protein resides in the nucleus. In terms of biological role, regulatory subunit of the SLX1-SLX4 structure-specific endonuclease that resolves DNA secondary structures generated during DNA repair and recombination. Has endonuclease activity towards branched DNA substrates, introducing single-strand cuts in duplex DNA close to junctions with ss-DNA. The sequence is that of Structure-specific endonuclease subunit SLX4 from Blastomyces gilchristii (strain SLH14081) (Blastomyces dermatitidis).